The following is a 35-amino-acid chain: Leukocyte cysteine proteinase inhibitor 2 (35 aa).

The disordered stretch occupies residues 1-35 (LAGGLTEPRPADTEIQEIANKVKPQLEEKTNKKYD). Residues 24–35 (PQLEEKTNKKYD) show a composition bias toward basic and acidic residues.

The protein belongs to the cystatin family.

It is found in the cytoplasm. Functionally, potent inhibitor of cathepsins L and S, and papain. The protein is Leukocyte cysteine proteinase inhibitor 2 of Sus scrofa (Pig).